A 229-amino-acid polypeptide reads, in one-letter code: Flagellar L-ring protein (229 aa).

The signal sequence occupies residues 1–20; it reads MLKTVLRLPVCAALLALAAG. C21 is lipidated: N-palmitoyl cysteine. Residue C21 is the site of S-diacylglycerol cysteine attachment.

The protein belongs to the FlgH family. In terms of assembly, the basal body constitutes a major portion of the flagellar organelle and consists of four rings (L,P,S, and M) mounted on a central rod.

It is found in the cell outer membrane. The protein resides in the bacterial flagellum basal body. Functionally, assembles around the rod to form the L-ring and probably protects the motor/basal body from shearing forces during rotation. The sequence is that of Flagellar L-ring protein from Bordetella pertussis (strain Tohama I / ATCC BAA-589 / NCTC 13251).